A 290-amino-acid chain; its full sequence is Acetyl-coenzyme A carboxylase carboxyl transferase subunit beta (290 aa).

The CoA carboxyltransferase N-terminal domain occupies 28-290; sequence VMTKCPQCKK…GGGESGWWRN (263 aa). Residues Cys-32, Cys-35, Cys-51, and Cys-54 each contribute to the Zn(2+) site. A C4-type zinc finger spans residues 32 to 54; it reads CPQCKKIMYTKELVKNLRVCLSC.

Belongs to the AccD/PCCB family. As to quaternary structure, acetyl-CoA carboxylase is a heterohexamer composed of biotin carboxyl carrier protein (AccB), biotin carboxylase (AccC) and two subunits each of ACCase subunit alpha (AccA) and ACCase subunit beta (AccD). Zn(2+) serves as cofactor.

It localises to the cytoplasm. The catalysed reaction is N(6)-carboxybiotinyl-L-lysyl-[protein] + acetyl-CoA = N(6)-biotinyl-L-lysyl-[protein] + malonyl-CoA. It participates in lipid metabolism; malonyl-CoA biosynthesis; malonyl-CoA from acetyl-CoA: step 1/1. Its function is as follows. Component of the acetyl coenzyme A carboxylase (ACC) complex. Biotin carboxylase (BC) catalyzes the carboxylation of biotin on its carrier protein (BCCP) and then the CO(2) group is transferred by the transcarboxylase to acetyl-CoA to form malonyl-CoA. This is Acetyl-coenzyme A carboxylase carboxyl transferase subunit beta from Geobacillus thermodenitrificans (strain NG80-2).